Here is a 138-residue protein sequence, read N- to C-terminus: uncharacterized protein (138 aa).

35–42 (DFIGSFYN) is a binding site for ATP.

This is an uncharacterized protein from Acanthamoeba polyphaga mimivirus (APMV).